A 136-amino-acid chain; its full sequence is Large ribosomal subunit protein bL17 (136 aa).

This sequence belongs to the bacterial ribosomal protein bL17 family. Part of the 50S ribosomal subunit. Contacts protein L32.

This is Large ribosomal subunit protein bL17 from Rhodopseudomonas palustris (strain BisB5).